Reading from the N-terminus, the 395-residue chain is Nicotinamide/nicotinic acid mononucleotide adenylyltransferase 2 (395 aa).

Disordered stretches follow at residues 1-34 (MDPT…SGPI) and 62-102 (KKNA…NGID). The span at 9-24 (FKPPQPNEELQPPPDP) shows a compositional bias: pro residues. Ser-85, Ser-89, and Ser-90 each carry phosphoserine. NAD(+)-binding residues include Ser-167 and Phe-168. Positions 175 and 209 each coordinate ATP. NAD(+) contacts are provided by Thr-247, Gly-282, Asp-284, Trp-295, Arg-314, and Asn-345. Position 350-353 (350-353 (TKVR)) interacts with ATP.

This sequence belongs to the eukaryotic NMN adenylyltransferase family. Co(2+) serves as cofactor.

It localises to the nucleus. It carries out the reaction beta-nicotinamide D-ribonucleotide + ATP + H(+) = diphosphate + NAD(+). The catalysed reaction is nicotinate beta-D-ribonucleotide + ATP + H(+) = deamido-NAD(+) + diphosphate. The protein operates within cofactor biosynthesis; NAD(+) biosynthesis; deamido-NAD(+) from nicotinate D-ribonucleotide: step 1/1. It participates in cofactor biosynthesis; NAD(+) biosynthesis; NAD(+) from nicotinamide D-ribonucleotide: step 1/1. Catalyzes the formation of NAD(+) from nicotinamide mononucleotide (NMN) and ATP. Can also use the deamidated form; nicotinic acid mononucleotide (NaMN) as substrate to form deamido-NAD(+) (NaAD). Key enzyme in both de novo and salvage pathways for NAD(+) biosynthesis. Predominantly acts in the salvage pathways via NMN. The protein is Nicotinamide/nicotinic acid mononucleotide adenylyltransferase 2 of Saccharomyces cerevisiae (strain ATCC 204508 / S288c) (Baker's yeast).